Consider the following 134-residue polypeptide: Translation initiation factor 2 subunit beta (134 aa).

Residues 1–12 show a composition bias toward basic and acidic residues; it reads MEYDDMLDRAME. Positions 1-28 are disordered; it reads MEYDDMLDRAMEETPEIDGTSERFEVPD.

It belongs to the eIF-2-beta/eIF-5 family. Heterotrimer composed of an alpha, a beta and a gamma chain.

Its function is as follows. eIF-2 functions in the early steps of protein synthesis by forming a ternary complex with GTP and initiator tRNA. This chain is Translation initiation factor 2 subunit beta, found in Haloarcula marismortui (strain ATCC 43049 / DSM 3752 / JCM 8966 / VKM B-1809) (Halobacterium marismortui).